A 373-amino-acid polypeptide reads, in one-letter code: Quinolinate synthase (373 aa).

The iminosuccinate site is built by His46 and Ser63. Position 109 (Cys109) interacts with [4Fe-4S] cluster. Iminosuccinate is bound by residues 142 to 144 (YMN) and Ser163. Residue Cys232 participates in [4Fe-4S] cluster binding. Residues 258-260 (HPE) and Thr275 each bind iminosuccinate. [4Fe-4S] cluster is bound at residue Cys324.

It belongs to the quinolinate synthase family. Type 3 subfamily. [4Fe-4S] cluster is required as a cofactor.

The protein resides in the cytoplasm. It catalyses the reaction iminosuccinate + dihydroxyacetone phosphate = quinolinate + phosphate + 2 H2O + H(+). It functions in the pathway cofactor biosynthesis; NAD(+) biosynthesis; quinolinate from iminoaspartate: step 1/1. In terms of biological role, catalyzes the condensation of iminoaspartate with dihydroxyacetone phosphate to form quinolinate. The polypeptide is Quinolinate synthase (Acidobacterium capsulatum (strain ATCC 51196 / DSM 11244 / BCRC 80197 / JCM 7670 / NBRC 15755 / NCIMB 13165 / 161)).